The following is a 973-amino-acid chain: E3 ubiquitin-protein ligase MIB2 (973 aa).

The MIB/HERC2 1 domain maps to 1-80; sequence MDLDPHAGVQ…AHDLLLYDNA (80 aa). The ZZ-type zinc-finger motif lies at 86–138; the sequence is HPNIICDCCKKHGLRGMRWKCRVCFDYDLCTQCYMHNKHDLTHAFERYETSHS. 8 residues coordinate Zn(2+): Cys-91, Cys-94, Cys-106, Cys-109, Cys-115, Cys-118, His-124, and His-128. The region spanning 149-227 is the MIB/HERC2 2 domain; that stretch reads LPRIPLRGIF…KVDLRCVGEA (79 aa). A Phosphoserine modification is found at Ser-251. ANK repeat units lie at residues 480-509, 513-542, 546-575, 579-611, 615-644, 649-679, 683-712, 716-744, and 785-814; these read QGRTALQVAAYLGQVELVRLLLQARASMDL, EGNTVLHYTAMGNQPEATRVLLSAGCAVDA, TRSTALHVAVQRGFLEVVKILCERGCDVNL, HADTPLHSAISAGAGASSIVEVLTEVPGIDVTA, QGFTLLHHASLKGHVLAVRKILARARQLVD, DGFTALHLAALNNHREVAQVLIREGRCDVNV, KLQSPLHLAVQQAHLGLVPLLVDAGCSVNT, EGDTALHVALQRHQLLPLVADRAGGDPGP, and RGRSPLDLATEGRVLKALQGCAQRFRERQA. RING-type zinc fingers lie at residues 850 to 885 and 929 to 962; these read CLVCSELALLILFSPCQHRTVCEECARRMKKCIRCQ and CPICIDSHIRLVFQCGHGACAPCGAALNACPICR.

Interacts with actin monomer. Ubiquitinated. Possibly via autoubiquitination. Highly expressed in brain, heart, liver and kidney.

It localises to the cytoplasm. It is found in the endosome. The catalysed reaction is S-ubiquitinyl-[E2 ubiquitin-conjugating enzyme]-L-cysteine + [acceptor protein]-L-lysine = [E2 ubiquitin-conjugating enzyme]-L-cysteine + N(6)-ubiquitinyl-[acceptor protein]-L-lysine.. It participates in protein modification; protein ubiquitination. E3 ubiquitin-protein ligase that mediates ubiquitination of Delta receptors, which act as ligands of Notch proteins. Positively regulates the Delta-mediated Notch signaling by ubiquitinating the intracellular domain of Delta, leading to endocytosis of Delta receptors. The sequence is that of E3 ubiquitin-protein ligase MIB2 (Mib2) from Mus musculus (Mouse).